The following is a 31-amino-acid chain: L-amino-acid oxidase (31 aa).

Belongs to the flavin monoamine oxidase family. FIG1 subfamily. Homodimer; non-covalently linked. The cofactor is FAD. Post-translationally, N-glycosylated. As to expression, expressed by the venom gland.

The protein localises to the secreted. It carries out the reaction an L-alpha-amino acid + O2 + H2O = a 2-oxocarboxylate + H2O2 + NH4(+). The catalysed reaction is L-leucine + O2 + H2O = 4-methyl-2-oxopentanoate + H2O2 + NH4(+). The enzyme catalyses L-phenylalanine + O2 + H2O = 3-phenylpyruvate + H2O2 + NH4(+). It catalyses the reaction L-histidine + O2 + H2O = 3-(imidazol-5-yl)pyruvate + H2O2 + NH4(+). Catalyzes an oxidative deamination of predominantly hydrophobic and aromatic L-amino acids, thus producing hydrogen peroxide that may contribute to the diverse toxic effects of this enzyme. Is moderately active on L-Leu, L-His, and L-Phe, and very weakly active on L-Thr, and L-Cys. Exhibits diverse biological activities, such as hemorrhage, hemolysis, edema, antibacterial and antiparasitic activities, as well as regulation of platelet aggregation. Its effect on platelets is controversial, since it either induces aggregation or inhibits agonist-induced aggregation. These different effects are probably due to different experimental conditions. Inhibits growth of B.subtilis strain ATCC 6633 (MIC=32 uM), E.faecalis strain ATCC 12953 (MIC=32 uM), S.aureus strain ATCC 29213 (MIC=32 uM), S.pyogenes strain ATCC 19615 (MIC=8 uM), E.coli strain ATCC 8739 (MIC=4 uM), K.pneumoniae strain ATCC 13885 (MIC=2 uM), P.mirabilis strain ATCC 25933 (MIC=2 uM), P.aeruginosa strain ATCC 15442 (MIC=8 uM) and S.typhimurium strain ATCC 14028 (MIC=8 uM). The polypeptide is L-amino-acid oxidase (Bothrops mattogrossensis (Pitviper)).